The sequence spans 274 residues: Orotidine 5'-phosphate decarboxylase (274 aa).

Substrate is bound by residues D40, 62–64, 93–102, Y227, and R245; these read KTH and DRKFIDIGNT. Catalysis depends on K95, which acts as the Proton donor.

Belongs to the OMP decarboxylase family.

It catalyses the reaction orotidine 5'-phosphate + H(+) = UMP + CO2. The protein operates within pyrimidine metabolism; UMP biosynthesis via de novo pathway; UMP from orotate: step 2/2. In Emericella nidulans (strain FGSC A4 / ATCC 38163 / CBS 112.46 / NRRL 194 / M139) (Aspergillus nidulans), this protein is Orotidine 5'-phosphate decarboxylase (pyrG).